Consider the following 229-residue polypeptide: Cytidylate kinase (229 aa).

10-18 (GHSSSGKST) is a binding site for ATP.

The protein belongs to the cytidylate kinase family. Type 1 subfamily.

The protein resides in the cytoplasm. The enzyme catalyses CMP + ATP = CDP + ADP. It catalyses the reaction dCMP + ATP = dCDP + ADP. The sequence is that of Cytidylate kinase from Parabacteroides distasonis (strain ATCC 8503 / DSM 20701 / CIP 104284 / JCM 5825 / NCTC 11152).